We begin with the raw amino-acid sequence, 331 residues long: MDQKRPQLKARVEGDYGEFVLEPLTRGYGVTIGNPIRRILMSSIPGTAVTSVYIEDVLHEFSTIPGVKEDVIRIILNLKELVVKFHAPGPKTLTLRAQGEGVVKASAFEVPSDAEIVNPDLTIATLAEDGKLVMEVRVEEGEGYVPADKHATKDRINSIPVDAVFSPVRRVAYHVENTRVGQQTDLDRLILRIWTDGSVGPQEALDRAVEILRDELTVFGNVETVSAAAPELPSVYTPAAPIVSGYDLPRQPELSINPQPYPADLDTPRVTLEGLGLTTRVLHSLKEEGIDSVDALCALSDRDLKKVPGIGERSLDEIKQQLAQFGLALRD.

The alpha N-terminal domain (alpha-NTD) stretch occupies residues 1–223 (MDQKRPQLKA…DELTVFGNVE (223 aa)). Positions 260 to 331 (PYPADLDTPR…LAQFGLALRD (72 aa)) are alpha C-terminal domain (alpha-CTD).

It belongs to the RNA polymerase alpha chain family. As to quaternary structure, homodimer. The RNAP catalytic core consists of 2 alpha, 1 beta, 1 beta' and 1 omega subunit. When a sigma factor is associated with the core the holoenzyme is formed, which can initiate transcription.

It carries out the reaction RNA(n) + a ribonucleoside 5'-triphosphate = RNA(n+1) + diphosphate. In terms of biological role, DNA-dependent RNA polymerase catalyzes the transcription of DNA into RNA using the four ribonucleoside triphosphates as substrates. The polypeptide is DNA-directed RNA polymerase subunit alpha (Deinococcus geothermalis (strain DSM 11300 / CIP 105573 / AG-3a)).